The chain runs to 347 residues: Peroxidase C2 (347 aa).

The signal sequence occupies residues 1 to 24; that stretch reads MHSSSSLIKLGFLLLLLNVSLSHA. Disulfide bonds link cysteine 35–cysteine 115, cysteine 68–cysteine 73, cysteine 121–cysteine 325, and cysteine 201–cysteine 233. The active-site Proton acceptor is histidine 66. Residues aspartate 67, valine 70, glycine 72, aspartate 74, and serine 76 each coordinate Ca(2+). Residue asparagine 81 is glycosylated (N-linked (GlcNAc...) asparagine). Proline 163 is a substrate binding site. A heme b-binding site is contributed by histidine 194. Threonine 195 contacts Ca(2+). Asparagine 210 and asparagine 238 each carry an N-linked (GlcNAc...) asparagine glycan. 3 residues coordinate Ca(2+): aspartate 246, threonine 249, and aspartate 254.

Belongs to the peroxidase family. Classical plant (class III) peroxidase subfamily. Ca(2+) is required as a cofactor. It depends on heme b as a cofactor.

It is found in the secreted. It localises to the vacuole. The enzyme catalyses 2 a phenolic donor + H2O2 = 2 a phenolic radical donor + 2 H2O. In terms of biological role, removal of H(2)O(2), oxidation of toxic reductants, biosynthesis and degradation of lignin, suberization, auxin catabolism, response to environmental stresses such as wounding, pathogen attack and oxidative stress. These functions might be dependent on each isozyme/isoform in each plant tissue. This chain is Peroxidase C2 (PRXC2), found in Armoracia rusticana (Horseradish).